The sequence spans 293 residues: Acetyl-coenzyme A carboxylase carboxyl transferase subunit beta (293 aa).

Residues 29–293 (LWVKCSECSQ…GVKELAEANT (265 aa)) enclose the CoA carboxyltransferase N-terminal domain. 4 residues coordinate Zn(2+): cysteine 33, cysteine 36, cysteine 52, and cysteine 55. The C4-type zinc-finger motif lies at 33-55 (CSECSQVAYRKDLISNFNVCNNC).

The protein belongs to the AccD/PCCB family. In terms of assembly, acetyl-CoA carboxylase is a heterohexamer composed of biotin carboxyl carrier protein (AccB), biotin carboxylase (AccC) and two subunits each of ACCase subunit alpha (AccA) and ACCase subunit beta (AccD). Requires Zn(2+) as cofactor.

Its subcellular location is the cytoplasm. The catalysed reaction is N(6)-carboxybiotinyl-L-lysyl-[protein] + acetyl-CoA = N(6)-biotinyl-L-lysyl-[protein] + malonyl-CoA. The protein operates within lipid metabolism; malonyl-CoA biosynthesis; malonyl-CoA from acetyl-CoA: step 1/1. Component of the acetyl coenzyme A carboxylase (ACC) complex. Biotin carboxylase (BC) catalyzes the carboxylation of biotin on its carrier protein (BCCP) and then the CO(2) group is transferred by the transcarboxylase to acetyl-CoA to form malonyl-CoA. This chain is Acetyl-coenzyme A carboxylase carboxyl transferase subunit beta, found in Prochlorococcus marinus (strain AS9601).